A 340-amino-acid chain; its full sequence is Fructose-1,6-bisphosphatase class 1 (340 aa).

Mg(2+) contacts are provided by Glu107, Asp126, Leu128, and Asp129. A substrate-binding site is contributed by Asn215. Mg(2+) is bound at residue Glu287.

The protein belongs to the FBPase class 1 family. In terms of assembly, homotetramer. Requires Mg(2+) as cofactor.

It localises to the cytoplasm. The catalysed reaction is beta-D-fructose 1,6-bisphosphate + H2O = beta-D-fructose 6-phosphate + phosphate. Its pathway is carbohydrate biosynthesis; gluconeogenesis. In Brucella canis (strain ATCC 23365 / NCTC 10854 / RM-666), this protein is Fructose-1,6-bisphosphatase class 1.